The following is a 577-amino-acid chain: Arginine--tRNA ligase (577 aa).

The 'HIGH' region motif lies at 122-132; it reads PNVAKEMHVGH.

This sequence belongs to the class-I aminoacyl-tRNA synthetase family. Monomer.

The protein localises to the cytoplasm. The catalysed reaction is tRNA(Arg) + L-arginine + ATP = L-arginyl-tRNA(Arg) + AMP + diphosphate. In Escherichia coli O8 (strain IAI1), this protein is Arginine--tRNA ligase.